The sequence spans 496 residues: UDP-N-acetylmuramoylalanine--D-glutamate ligase (496 aa).

130-136 contributes to the ATP binding site; sequence GTNGKTT.

It belongs to the MurCDEF family.

It is found in the cytoplasm. The enzyme catalyses UDP-N-acetyl-alpha-D-muramoyl-L-alanine + D-glutamate + ATP = UDP-N-acetyl-alpha-D-muramoyl-L-alanyl-D-glutamate + ADP + phosphate + H(+). Its pathway is cell wall biogenesis; peptidoglycan biosynthesis. In terms of biological role, cell wall formation. Catalyzes the addition of glutamate to the nucleotide precursor UDP-N-acetylmuramoyl-L-alanine (UMA). The chain is UDP-N-acetylmuramoylalanine--D-glutamate ligase (murD) from Mycobacterium tuberculosis (strain CDC 1551 / Oshkosh).